Here is an 892-residue protein sequence, read N- to C-terminus: Integrator complex subunit 6 (892 aa).

The 225-residue stretch at 3–227 (ILLFLIDTSA…QCLESLVQKV (225 aa)) folds into the VWFA domain. An Inhibitory loop motif is present at residues 630 to 637 (MMIDEADE). 3 disordered regions span residues 665 to 692 (MSPL…GTQG), 711 to 754 (VGGT…AAPD), and 771 to 793 (PDHT…EVNE).

This sequence belongs to the Integrator subunit 6 family. As to quaternary structure, component of the Integrator complex, composed of core subunits INTS1, INTS2, INTS3, INTS4, INTS5, INTS6, INTS7, INTS8, INTS9/RC74, INTS10, INTS11/CPSF3L, INTS12, INTS13, INTS14 and INTS15. The core complex associates with protein phosphatase 2A subunits PPP2CA and PPP2R1A, to form the Integrator-PP2A (INTAC) complex.

Its subcellular location is the nucleus. The protein resides in the chromosome. In terms of biological role, component of the integrator complex, a multiprotein complex that terminates RNA polymerase II (Pol II) transcription in the promoter-proximal region of genes. The integrator complex provides a quality checkpoint during transcription elongation by driving premature transcription termination of transcripts that are unfavorably configured for transcriptional elongation: the complex terminates transcription by (1) catalyzing dephosphorylation of the C-terminal domain (CTD) of Pol II subunit POLR2A/RPB1 and SUPT5H/SPT5, (2) degrading the exiting nascent RNA transcript via endonuclease activity and (3) promoting the release of Pol II from bound DNA. The integrator complex is also involved in terminating the synthesis of non-coding Pol II transcripts, such as enhancer RNAs (eRNAs), small nuclear RNAs (snRNAs), telomerase RNAs and long non-coding RNAs (lncRNAs). Within the integrator complex, INTS6 acts as a molecular adapter that promotes assembly of protein phosphatase 2A (PP2A) subunits to the integrator core complex, promoting recruitment of PP2A to transcription pause-release checkpoint. The chain is Integrator complex subunit 6 (ints6l) from Danio rerio (Zebrafish).